A 275-amino-acid polypeptide reads, in one-letter code: Formamidopyrimidine-DNA glycosylase (275 aa).

The active-site Schiff-base intermediate with DNA is proline 2. Glutamate 3 serves as the catalytic Proton donor. Lysine 58 functions as the Proton donor; for beta-elimination activity in the catalytic mechanism. The DNA site is built by histidine 93, arginine 111, and arginine 156. Residues 241-275 form an FPG-type zinc finger; the sequence is FVYDRAGQPCRVCGTPVRQIVQGQRSTYFCPTCQR. The active-site Proton donor; for delta-elimination activity is arginine 265.

Belongs to the FPG family. In terms of assembly, monomer. It depends on Zn(2+) as a cofactor.

It catalyses the reaction Hydrolysis of DNA containing ring-opened 7-methylguanine residues, releasing 2,6-diamino-4-hydroxy-5-(N-methyl)formamidopyrimidine.. The catalysed reaction is 2'-deoxyribonucleotide-(2'-deoxyribose 5'-phosphate)-2'-deoxyribonucleotide-DNA = a 3'-end 2'-deoxyribonucleotide-(2,3-dehydro-2,3-deoxyribose 5'-phosphate)-DNA + a 5'-end 5'-phospho-2'-deoxyribonucleoside-DNA + H(+). Its function is as follows. Involved in base excision repair of DNA damaged by oxidation or by mutagenic agents. Acts as a DNA glycosylase that recognizes and removes damaged bases. Has a preference for oxidized purines, such as 7,8-dihydro-8-oxoguanine (8-oxoG). Has AP (apurinic/apyrimidinic) lyase activity and introduces nicks in the DNA strand. Cleaves the DNA backbone by beta-delta elimination to generate a single-strand break at the site of the removed base with both 3'- and 5'-phosphates. In Burkholderia cenocepacia (strain HI2424), this protein is Formamidopyrimidine-DNA glycosylase.